Reading from the N-terminus, the 328-residue chain is Ferredoxin--NADP reductase 1 (328 aa).

Residues Asp-28, Gln-36, Tyr-41, Ala-81, Ile-116, Asp-277, and Ser-320 each contribute to the FAD site.

This sequence belongs to the ferredoxin--NADP reductase type 2 family. Homodimer. FAD serves as cofactor.

It carries out the reaction 2 reduced [2Fe-2S]-[ferredoxin] + NADP(+) + H(+) = 2 oxidized [2Fe-2S]-[ferredoxin] + NADPH. In Sulfolobus acidocaldarius (strain ATCC 33909 / DSM 639 / JCM 8929 / NBRC 15157 / NCIMB 11770), this protein is Ferredoxin--NADP reductase 1.